The primary structure comprises 425 residues: Ribosome biogenesis protein WDR12 homolog (425 aa).

Positions 7–93 (IQAKFFTKDE…ETIVHLEYLE (87 aa)) are ubiquitin-like (UBL) domain. WD repeat units lie at residues 105 to 142 (IHDD…RRLT), 145 to 187 (GHLG…NAVE), 194 to 233 (GHAR…TDTD), 265 to 303 (GHHE…MKSQ), 305 to 344 (AGSK…GTIV), 350 to 390 (SHAG…APLY), and 394 to 425 (GHED…FEHK). The tract at residues 227–253 (PDSTDTDHGQDGSEEGSRKKQKTVDGK) is disordered. The span at 231 to 253 (DTDHGQDGSEEGSRKKQKTVDGK) shows a compositional bias: basic and acidic residues.

This sequence belongs to the WD repeat WDR12/YTM1 family.

It is found in the nucleus. The protein localises to the nucleolus. The protein resides in the nucleoplasm. Required for maturation of ribosomal RNAs and formation of the large ribosomal subunit. This Ixodes scapularis (Black-legged tick) protein is Ribosome biogenesis protein WDR12 homolog.